Here is a 307-residue protein sequence, read N- to C-terminus: Aspartate carbamoyltransferase catalytic subunit (307 aa).

2 residues coordinate carbamoyl phosphate: R54 and T55. K83 is a binding site for L-aspartate. Positions 104, 132, and 135 each coordinate carbamoyl phosphate. L-aspartate-binding residues include R165 and R228. Residues L267 and P268 each coordinate carbamoyl phosphate.

This sequence belongs to the aspartate/ornithine carbamoyltransferase superfamily. ATCase family. As to quaternary structure, heterododecamer (2C3:3R2) of six catalytic PyrB chains organized as two trimers (C3), and six regulatory PyrI chains organized as three dimers (R2).

The enzyme catalyses carbamoyl phosphate + L-aspartate = N-carbamoyl-L-aspartate + phosphate + H(+). It participates in pyrimidine metabolism; UMP biosynthesis via de novo pathway; (S)-dihydroorotate from bicarbonate: step 2/3. In terms of biological role, catalyzes the condensation of carbamoyl phosphate and aspartate to form carbamoyl aspartate and inorganic phosphate, the committed step in the de novo pyrimidine nucleotide biosynthesis pathway. The sequence is that of Aspartate carbamoyltransferase catalytic subunit from Clostridium perfringens (strain 13 / Type A).